Consider the following 497-residue polypeptide: Guanosine-5'-triphosphate,3'-diphosphate pyrophosphatase (497 aa).

Belongs to the GppA/Ppx family. GppA subfamily.

It carries out the reaction guanosine 3'-diphosphate 5'-triphosphate + H2O = guanosine 3',5'-bis(diphosphate) + phosphate + H(+). The protein operates within purine metabolism; ppGpp biosynthesis; ppGpp from GTP: step 2/2. In terms of biological role, catalyzes the conversion of pppGpp to ppGpp. Guanosine pentaphosphate (pppGpp) is a cytoplasmic signaling molecule which together with ppGpp controls the 'stringent response', an adaptive process that allows bacteria to respond to amino acid starvation, resulting in the coordinated regulation of numerous cellular activities. The chain is Guanosine-5'-triphosphate,3'-diphosphate pyrophosphatase from Vibrio parahaemolyticus serotype O3:K6 (strain RIMD 2210633).